Reading from the N-terminus, the 375-residue chain is AA9 family lytic polysaccharide monooxygenase CEL1 (375 aa).

The signal sequence occupies residues 1-16 (MLFPALALLCPVLVAA). Position 119 (H119) interacts with Cu(2+). C130 and C135 are disulfide-bonded. N-linked (GlcNAc...) asparagine glycosylation is present at N132. H196 lines the O2 pocket. N197 carries an N-linked (GlcNAc...) asparagine glycan. A Cu(2+)-binding site is contributed by Y212. A disulfide bridge connects residues C232 and C237. Positions 287-375 (NGMSSSPSSS…RSRVAHLDRH (89 aa)) are disordered. The segment covering 290 to 341 (SSSPSSSSGVSSSSSSSVASSDTSDSTTSSGVVAVNVSAASSPSSSISANSA) has biased composition (low complexity). The N-linked (GlcNAc...) asparagine glycan is linked to N325. Basic residues predominate over residues 347-369 (KTCKRKKRSKIAGQKRHIHRSRV).

The protein belongs to the polysaccharide monooxygenase AA9 family. Cu(2+) is required as a cofactor.

Its subcellular location is the secreted. The protein localises to the cell wall. The catalysed reaction is [(1-&gt;4)-beta-D-glucosyl]n+m + reduced acceptor + O2 = 4-dehydro-beta-D-glucosyl-[(1-&gt;4)-beta-D-glucosyl]n-1 + [(1-&gt;4)-beta-D-glucosyl]m + acceptor + H2O.. Its function is as follows. Lytic polysaccharide monooxygenase (LPMO) that depolymerizes polysaccharides via the oxidation of scissile alpha- or beta-(1-4)-glycosidic bonds, yielding C4 oxidation products. Catalysis by LPMOs requires the reduction of the active-site copper from Cu(II) to Cu(I) by a reducing agent and H(2)O(2) or O(2) as a cosubstrate. Required for the expression of stress response phenotypes, including thermotolerance, cell wall integrity, and efficient cell cycle progression. Promotes intrinsic fungal cell wall remodeling events required for efficient adaptation to the host environment. Required for virulence in a murine inhalational model of cryptococcal infection as well as in Galleria mellonella larvae. This is AA9 family lytic polysaccharide monooxygenase CEL1 from Cryptococcus neoformans var. grubii serotype A (strain H99 / ATCC 208821 / CBS 10515 / FGSC 9487) (Filobasidiella neoformans var. grubii).